The sequence spans 130 residues: Cystatin (130 aa).

An N-terminal signal peptide occupies residues 1 to 19; the sequence is MEWKIVVPLLAVAFTVANA. A Secondary area of contact motif is present at residues 67-71; the sequence is QVVSG. Disulfide bonds link cysteine 85-cysteine 94 and cysteine 108-cysteine 128.

Belongs to the cystatin family. As to expression, ubiquitous expression including brain, white muscle, heart, gill, kidney, spleen, liver and skin with the highest and lowest level in brain and gill, respectively.

The protein localises to the secreted. Cysteine proteinase inhibitor. In Oncorhynchus keta (Chum salmon), this protein is Cystatin.